The chain runs to 4857 residues: Dual E2 ubiquitin-conjugating enzyme/E3 ubiquitin-protein ligase BIRC6 (4857 aa).

WD repeat units lie at residues 68 to 106 (DGLH…QASA) and 107 to 136 (LSAK…AVGC). The BIR repeat unit spans residues 268 to 377 (PELGVGPGRS…LSVTLATSPA (110 aa)). C328, C331, H348, and C355 together coordinate Zn(2+). Residues 379 to 426 (FPCTDGTDRISCFGSGSCPHFLAAATKRGKICIWDVSKLMKVHLKFEI) form a WD 3 repeat. Disordered stretches follow at residues 465–498 (DIPK…TSQK) and 579–618 (ATSP…NSEL). Residues 472–482 (DSDDLLEDSDS) are compositionally biased toward acidic residues. Phosphoserine is present on residues S473, S480, S482, S581, and S590. 4 WD repeats span residues 501–720 (MEVS…VQCL), 730–850 (NLCI…QHIK), 851–927 (DPQD…AKVE), and 928–966 (PPKK…FLQI). Over residues 579–588 (ATSPISSNSH) the composition is skewed to polar residues. The segment covering 595-618 (SRTQGESISEQGSTDNESCTNSEL) has biased composition (polar residues). Disordered regions lie at residues 984-1004 (LSKG…PSSP) and 1053-1073 (QQQR…AAQH). The segment covering 992–1004 (SEGSKPLSNPSSP) has biased composition (polar residues). Over residues 1056-1065 (RRHPQHLHQQ) the composition is skewed to basic residues. Phosphothreonine is present on T1710. Phosphoserine occurs at positions 2222 and 2955. The disordered stretch occupies residues 2945-2973 (SVTTNTTDSVSDEEKVSGGKDGNGSSTSV). An HRRAR loop; important for DIABLO/SMAC and HTRA2 binding region spans residues 3189–3193 (HRRAR). One can recognise a Ubiquitin-like domain in the interval 3819 to 4068 (DEKVTMFLQS…ESLLETCPIQ (250 aa)). The interval 3923 to 3949 (QSKRAVSATPPRPPSRRGRTIPDKIGS) is disordered. T3931 bears the Phosphothreonine mark. The residue at position 4023 (S4023) is a Phosphoserine. The tract at residues 4260–4283 (RVPNSSVNQTEPQVSSSHNPTSTE) is disordered. The span at 4261-4283 (VPNSSVNQTEPQVSSSHNPTSTE) shows a compositional bias: polar residues. Residues 4573 to 4740 (ARARRLAQEA…IRQATVKWAM (168 aa)) enclose the UBC core domain. C4666 functions as the Glycyl thioester intermediate in the catalytic mechanism. Residues 4835-4857 (EETLMHDQVKPSSSKELPSDFQL) are disordered. Over residues 4844–4857 (KPSSSKELPSDFQL) the composition is skewed to polar residues.

The protein belongs to the BIRC6 family. As to quaternary structure, homodimer; antiparallel. Interacts with RNF41. Interacts with DIABLO/SMAC, likely with higher affinity to SMAC dimer than SMAC monomer; this interaction blocks the substrate-binding site and inhibits the caspase inhibition activity of BIRC6. Interacts with KIF23/MKLP1, USP8/UBPY, BIRC5/survivin, MAP2K1/MEK1, RAB8A/RAB8, RAB11A/RAB11, PLK1, EXOC3/SEC6 and EXOC4/SEC8. In terms of processing, ubiquitinated; mediated by RNF41 E3 ligase and leads to proteasomal degradation, impairing inhibition of apoptosis. Deubiquitinated by USP8/UBPY. Autoubiquitinated; mediated by E1 ubiquitin activating enzyme UBA6. Proteolytically cleaved. Acts as substrate for CASP3, CASP6, CASP7, CASP9 and HTRA2. Expressed in brain cancer cells.

The protein localises to the golgi apparatus. Its subcellular location is the trans-Golgi network membrane. The protein resides in the endosome. It is found in the cytoplasm. It localises to the cytoskeleton. The protein localises to the spindle pole. Its subcellular location is the microtubule organizing center. The protein resides in the centrosome. It is found in the midbody. It localises to the midbody ring. The catalysed reaction is S-ubiquitinyl-[E1 ubiquitin-activating enzyme]-L-cysteine + [acceptor protein]-L-lysine = [E1 ubiquitin-activating enzyme]-L-cysteine + N(6)-monoubiquitinyl-[acceptor protein]-L-lysine.. With respect to regulation, inhibited by DIABLO/SMAC, which competes for the substrate-binding sites on BIRC6. BIRC6 inhibits caspases and protease by ubiquitination but BIRC6 itself is subjected to protease cleavage by CASP3, CASP6, CASP7, CASP9 and HTRA2 by protease cleavage. Anti-apoptotic protein known as inhibitor of apoptosis (IAP) which can regulate cell death by controlling caspases and by acting as an E3 ubiquitin-protein ligase. Unlike most IAPs, does not contain a RING domain and it is not a RING-type E3 ligase. Instead acts as a dual E2/E3 enzyme that combines ubiquitin conjugating (E2) and ubiquitin ligase (E3) activities in a single polypeptide. Ubiquitination is mediated by a non-canonical E1 ubiquitin activating enzyme UBA6. Ubiquitinates CASP3, CASP7 and CASP9 and inhibits their caspase activity; also ubiquitinates their procaspases but to a weaker extent. Ubiquitinates pro-apoptotic factors DIABLO/SMAC and HTRA2. DIABLO/SMAC antagonizes the caspase inhibition activity of BIRC6 by competing for the same binding sites as the caspases. Ubiquitinates the autophagy protein MAP1LC3B; this activity is also inhibited by DIABLO/SMAC. Important regulator for the final stages of cytokinesis. Crucial for normal vesicle targeting to the site of abscission, but also for the integrity of the midbody and the midbody ring, and its striking ubiquitin modification. The polypeptide is Dual E2 ubiquitin-conjugating enzyme/E3 ubiquitin-protein ligase BIRC6 (BIRC6) (Homo sapiens (Human)).